The following is a 317-amino-acid chain: MATAGASSFEDEIMESDIELEGEAVEPDNDPPQKMGDPSVEVSDEKRDQAQLCKNKGVDAFSEGKLDEAIEHLTEAIVLNPTSAIAYATRAVIFVKSKKPNAAIRDADAALKINPDSAKGYKSRGMAKAMLGKWEEAAQDLRMAAKLDYDEEIGAELKKVEPNVLKIEEHRKKYERLRKERDIKKAEMEKQRKHAEEVSAASAALKDGDVIAIHSSSELDTKLKAASSLSRLVVLYFTAAWCGPCRFIGPVCKSLAEKHRNVVFLKVDIDELNSVAYRWNVSSVPSFFFVRNGKEIDKVVGADKNGLERKVAQHGSS.

The interval 1–48 is disordered; that stretch reads MATAGASSFEDEIMESDIELEGEAVEPDNDPPQKMGDPSVEVSDEKRD. The span at 9–29 shows a compositional bias: acidic residues; it reads FEDEIMESDIELEGEAVEPDN. TPR repeat units lie at residues 50 to 83, 85 to 117, and 119 to 151; these read AQLC…NPTS, IAYA…NPDS, and KGYK…DYDE. Residues 189–316 enclose the Thioredoxin domain; it reads EKQRKHAEEV…LERKVAQHGS (128 aa). Residues C242 and C245 each act as nucleophile in the active site. C242 and C245 are disulfide-bonded.

It belongs to the thioredoxin family.

In terms of biological role, probable thiol-disulfide oxidoreductase that may participate in various redox reactions and act as chaperone under heat shock. May interact with HSP70 proteins through the TPR repeats. The protein is TPR repeat-containing thioredoxin TDX of Oryza sativa subsp. japonica (Rice).